The following is a 106-amino-acid chain: Insulin-like peptide 03 (106 aa).

Positions 1–18 (MLFYFGLAVIFLIDSSQT) are cleaved as a signal peptide. The propeptide occupies 19-34 (QTLYKVNEVGGSQVDR). Cystine bridges form between Cys37–Cys93, Cys49–Cys106, and Cys92–Cys97. Positions 52-82 (KKRQNIPRKYGRDPNNILEKEEFAKRFLRVR) are cleaved as a propeptide — c peptide.

This sequence belongs to the insulin family.

Its subcellular location is the secreted. Functionally, insulin decreases blood glucose concentration. May have evolved to activate insulin receptors (INSR) in vertebrates. Molecular docking studies reveals unique interaction with the human insulin receptor. In vivo, insulin-like peptide injection reduces blood glucose levels in two models of zebrafish diabetes (streptozotocin- and glucose-induced). Also shorter swimming distance of zebrafish larvae, an effect which is not observed with human insulin. The chain is Insulin-like peptide 03 from Exaiptasia diaphana (Tropical sea anemone).